Consider the following 81-residue polypeptide: Putative defensin-like protein 25 (81 aa).

The signal sequence occupies residues 1 to 23 (MASLKVFSFALILVLTFSVDVEG). 4 disulfide bridges follow: Cys33–Cys81, Cys43–Cys68, Cys52–Cys77, and Cys56–Cys79.

The protein belongs to the DEFL family.

Its subcellular location is the secreted. The sequence is that of Putative defensin-like protein 25 from Arabidopsis thaliana (Mouse-ear cress).